A 281-amino-acid chain; its full sequence is CLA biosynthesis isomerase (281 aa).

Belongs to the ADC family.

It is found in the cytoplasm. It catalyses the reaction 10-oxo-(12Z)-octadecenoate = 10-oxo-(11E)-octadecenoate. It participates in lipid metabolism; fatty acid metabolism. Functionally, is involved in a saturation metabolic pathway of polyunsaturated fatty acids, that detoxifies unsaturated fatty acids and generates hydroxy fatty acids, oxo fatty acids, conjugated fatty acids such as conjugated linoleic acids (CLAs), and partially saturated trans-fatty acids as intermediates. CLA-DC catalyzes the migration of the carbon-carbon double bond in 10-oxo-(12Z)-octadecenoate to produce 10-oxo-(11E)-octadecenoate, during linoleate metabolism. As part of the gut microbiome, this enzyme modifies host fatty acid composition and is expected to improve human health by altering lipid metabolism related to the onset of metabolic syndrome. In Lactiplantibacillus plantarum (Lactobacillus plantarum), this protein is CLA biosynthesis isomerase.